The following is a 232-amino-acid chain: 5'-methylthioadenosine/S-adenosylhomocysteine nucleosidase (232 aa).

Glu12 acts as the Proton acceptor in catalysis. Residues Gly78, Met153, and 174–175 (ME) contribute to the substrate site. The active-site Proton donor is the Asp198.

It belongs to the PNP/UDP phosphorylase family. MtnN subfamily.

The enzyme catalyses S-adenosyl-L-homocysteine + H2O = S-(5-deoxy-D-ribos-5-yl)-L-homocysteine + adenine. The catalysed reaction is S-methyl-5'-thioadenosine + H2O = 5-(methylsulfanyl)-D-ribose + adenine. It carries out the reaction 5'-deoxyadenosine + H2O = 5-deoxy-D-ribose + adenine. Its pathway is amino-acid biosynthesis; L-methionine biosynthesis via salvage pathway; S-methyl-5-thio-alpha-D-ribose 1-phosphate from S-methyl-5'-thioadenosine (hydrolase route): step 1/2. Its function is as follows. Catalyzes the irreversible cleavage of the glycosidic bond in both 5'-methylthioadenosine (MTA) and S-adenosylhomocysteine (SAH/AdoHcy) to adenine and the corresponding thioribose, 5'-methylthioribose and S-ribosylhomocysteine, respectively. Also cleaves 5'-deoxyadenosine, a toxic by-product of radical S-adenosylmethionine (SAM) enzymes, into 5-deoxyribose and adenine. The sequence is that of 5'-methylthioadenosine/S-adenosylhomocysteine nucleosidase from Hydrogenovibrio crunogenus (strain DSM 25203 / XCL-2) (Thiomicrospira crunogena).